A 321-amino-acid polypeptide reads, in one-letter code: GTP 3',8-cyclase (321 aa).

The Radical SAM core domain maps to 5-233; the sequence is SFNRVIDYIR…QGSSKIYTLE (229 aa). Arg14 is a binding site for GTP. Residues Cys21 and Cys25 each contribute to the [4Fe-4S] cluster site. Residue Tyr27 coordinates S-adenosyl-L-methionine. Cys28 contributes to the [4Fe-4S] cluster binding site. GTP is bound at residue Arg64. Gly68 is an S-adenosyl-L-methionine binding site. Ser95 contributes to the GTP binding site. S-adenosyl-L-methionine is bound at residue Ser119. Lys155 lines the GTP pocket. Met189 contributes to the S-adenosyl-L-methionine binding site. [4Fe-4S] cluster is bound by residues Cys249 and Cys252. Position 254-256 (254-256) interacts with GTP; it reads RIR. Cys266 contributes to the [4Fe-4S] cluster binding site.

It belongs to the radical SAM superfamily. MoaA family. Monomer and homodimer. It depends on [4Fe-4S] cluster as a cofactor.

It carries out the reaction GTP + AH2 + S-adenosyl-L-methionine = (8S)-3',8-cyclo-7,8-dihydroguanosine 5'-triphosphate + 5'-deoxyadenosine + L-methionine + A + H(+). The protein operates within cofactor biosynthesis; molybdopterin biosynthesis. In terms of biological role, catalyzes the cyclization of GTP to (8S)-3',8-cyclo-7,8-dihydroguanosine 5'-triphosphate. The polypeptide is GTP 3',8-cyclase (Helicobacter pylori (strain HPAG1)).